Here is a 281-residue protein sequence, read N- to C-terminus: UDP-N-acetylenolpyruvoylglucosamine reductase (281 aa).

The FAD-binding PCMH-type domain occupies 17–180 (VGGKAKKLII…LSATFKFDNG (164 aa)). Residue arginine 159 is part of the active site. Serine 206 acts as the Proton donor in catalysis. Residue glutamate 276 is part of the active site.

This sequence belongs to the MurB family. The cofactor is FAD.

The protein localises to the cytoplasm. It carries out the reaction UDP-N-acetyl-alpha-D-muramate + NADP(+) = UDP-N-acetyl-3-O-(1-carboxyvinyl)-alpha-D-glucosamine + NADPH + H(+). It functions in the pathway cell wall biogenesis; peptidoglycan biosynthesis. Its function is as follows. Cell wall formation. This is UDP-N-acetylenolpyruvoylglucosamine reductase from Fusobacterium nucleatum subsp. nucleatum (strain ATCC 25586 / DSM 15643 / BCRC 10681 / CIP 101130 / JCM 8532 / KCTC 2640 / LMG 13131 / VPI 4355).